A 403-amino-acid chain; its full sequence is Shaggy-related protein kinase GSK4 (403 aa).

The region spanning 71 to 355 (YMAERVVGTG…ALEACAHSFF (285 aa)) is the Protein kinase domain. ATP-binding positions include 77–85 (VGTGSFGVV) and K100. D196 acts as the Proton acceptor in catalysis.

It belongs to the protein kinase superfamily. CMGC Ser/Thr protein kinase family. GSK-3 subfamily. Interacts with LIC.

It carries out the reaction L-seryl-[protein] + ATP = O-phospho-L-seryl-[protein] + ADP + H(+). It catalyses the reaction L-threonyl-[protein] + ATP = O-phospho-L-threonyl-[protein] + ADP + H(+). Functionally, probable serine-threonine kinase that may regulate brassinosteroid signaling. The chain is Shaggy-related protein kinase GSK4 from Oryza sativa subsp. japonica (Rice).